The chain runs to 293 residues: Probable mediator of RNA polymerase II transcription subunit 15b (293 aa).

This sequence belongs to the plant Mediator complex subunit 15 family. As to quaternary structure, component of the Mediator complex.

It localises to the nucleus. Functionally, component of the Mediator complex, a coactivator involved in the regulated transcription of nearly all RNA polymerase II-dependent genes. Mediator functions as a bridge to convey information from gene-specific regulatory proteins to the basal RNA polymerase II transcription machinery. The Mediator complex, having a compact conformation in its free form, is recruited to promoters by direct interactions with regulatory proteins and serves for the assembly of a functional preinitiation complex with RNA polymerase II and the general transcription factors. The protein is Probable mediator of RNA polymerase II transcription subunit 15b (MED15B) of Arabidopsis thaliana (Mouse-ear cress).